The following is a 349-amino-acid chain: Probable dual-specificity RNA methyltransferase RlmN (349 aa).

Residue Glu93 is the Proton acceptor of the active site. A Radical SAM core domain is found at 99–329 (YKHGNTICVS…TTIRREMGSD (231 aa)). Cys106 and Cys334 are oxidised to a cystine. 3 residues coordinate [4Fe-4S] cluster: Cys113, Cys117, and Cys120. S-adenosyl-L-methionine contacts are provided by residues 160 to 161 (GE), Ser192, 215 to 217 (SLH), and Asn291. Cys334 serves as the catalytic S-methylcysteine intermediate.

Belongs to the radical SAM superfamily. RlmN family. Requires [4Fe-4S] cluster as cofactor.

Its subcellular location is the cytoplasm. The catalysed reaction is adenosine(2503) in 23S rRNA + 2 reduced [2Fe-2S]-[ferredoxin] + 2 S-adenosyl-L-methionine = 2-methyladenosine(2503) in 23S rRNA + 5'-deoxyadenosine + L-methionine + 2 oxidized [2Fe-2S]-[ferredoxin] + S-adenosyl-L-homocysteine. The enzyme catalyses adenosine(37) in tRNA + 2 reduced [2Fe-2S]-[ferredoxin] + 2 S-adenosyl-L-methionine = 2-methyladenosine(37) in tRNA + 5'-deoxyadenosine + L-methionine + 2 oxidized [2Fe-2S]-[ferredoxin] + S-adenosyl-L-homocysteine. Its function is as follows. Specifically methylates position 2 of adenine 2503 in 23S rRNA and position 2 of adenine 37 in tRNAs. This chain is Probable dual-specificity RNA methyltransferase RlmN, found in Clostridium tetani (strain Massachusetts / E88).